The following is a 137-amino-acid chain: Histone H2B (137 aa).

Residues 1–10 are compositionally biased toward basic and acidic residues; the sequence is MPPKPADKKP. Residues 1–45 are disordered; sequence MPPKPADKKPASKAPATASKAPEKKDAGKKTAASGDKKKRTKARK. 2 positions are modified to N6-acetyllysine; alternate: K8 and K9. Residues K8 and K9 each participate in a glycyl lysine isopeptide (Lys-Gly) (interchain with G-Cter in SUMO); alternate cross-link. S12 carries the post-translational modification Phosphoserine. Residue K13 is modified to N6-acetyllysine. K24 carries the post-translational modification N6-acetyllysine; alternate. K24 is covalently cross-linked (Glycyl lysine isopeptide (Lys-Gly) (interchain with G-Cter in SUMO); alternate). K25 participates in a covalent cross-link: Glycyl lysine isopeptide (Lys-Gly) (interchain with G-Cter in SUMO). K131 participates in a covalent cross-link: Glycyl lysine isopeptide (Lys-Gly) (interchain with G-Cter in ubiquitin).

It belongs to the histone H2B family. As to quaternary structure, the nucleosome is a histone octamer containing two molecules each of H2A, H2B, H3 and H4 assembled in one H3-H4 heterotetramer and two H2A-H2B heterodimers. The octamer wraps approximately 147 bp of DNA. Monoubiquitinated by the ubc-2-bre-1 complex to form H2BK123ub1. H2BK123ub1 gives a specific tag for epigenetic transcriptional activation and is also prerequisite for H3K4me and H3K79me formation. H2BK123ub1 also modulates the formation of double-strand breaks during meiosis and is a prerequisite for DNA-damage checkpoint activation. Post-translationally, phosphorylated by ste-20 to form H2BS10ph during progression through meiotic prophase. May be correlated with chromosome condensation. In terms of processing, acetylated by gcn-5 to form H2BK11ac and H2BK16ac. H2BK16ac can also be formed by esa-1. Acetylation of N-terminal lysines and particularly formation of H2BK11acK16ac has a positive effect on transcription. Sumoylation to form H2BK6su or H2BK7su, and probably also H2BK16su or H2BK17su, occurs preferentially near the telomeres and represses gene transcription.

It localises to the nucleus. It is found in the chromosome. Core component of nucleosome. Nucleosomes wrap and compact DNA into chromatin, limiting DNA accessibility to the cellular machineries which require DNA as a template. Histones thereby play a central role in transcription regulation, DNA repair, DNA replication and chromosomal stability. DNA accessibility is regulated via a complex set of post-translational modifications of histones, also called histone code, and nucleosome remodeling. This Neurospora crassa (strain ATCC 24698 / 74-OR23-1A / CBS 708.71 / DSM 1257 / FGSC 987) protein is Histone H2B (hh2b).